Reading from the N-terminus, the 580-residue chain is MSITFNLKIAPFSGPGIQRSKETFPATEIQITASTKSTMTTKCSFNASTDFMGKLREKVGGKADKPPVVIHPVDISSNLCMIDTLQSLGVDRYFQSEINTLLEHTYRLWKEKKKNIIFKDVSCCAIAFRLLREKGYQVSSDKLAPFADYRIRDVATILELYRASQARLYEDEHTLEKLHDWSSNLLKQHLLNGSIPDHKLHKQVEYFLKNYHGILDRVAVRRSLDLYNINHHHRIPDVADGFPKEDFLEYSMQDFNICQAQQQEELHQLQRWYADCRLDTLNYGRDVVRIANFLTSAIFGEPEFSDARLAFAKHIILVTRIDDFFDHGGSREESYKILDLVQEWKEKPAEEYGSKEVEILFTAVYNTVNDLAEKAHIEQGRCVKPLLIKLWVEILTSFKKELDSWTEETALTLDEYLSSSWVSIGCRICILNSLQYLGIKLSEEMLSSQECTDLCRHVSSVDRLLNDVQTFKKERLENTINSVGLQLAAHKGERAMTEEDAMSKIKEMADYHRRKLMQIVYKEGTVFPRECKDVFLRVCRIGYYLYSSGDEFTSPQQMKEDMKSLVYQPVKIHPLEAINV.

A chloroplast-targeting transit peptide spans M1–T32. Residues D322, D326, N466, T470, and E474 each coordinate Mg(2+). Positions D322–D326 match the DDXXD motif motif.

Belongs to the terpene synthase family. Mg(2+) is required as a cofactor. Present in both leaves and flowers, with higher levels in leaves.

The protein resides in the plastid. The protein localises to the chloroplast. The catalysed reaction is peregrinol diphosphate = (13R)-9,13-epoxylabd-14-ene + diphosphate. The enzyme catalyses (+)-copalyl diphosphate = miltiradiene + diphosphate. It carries out the reaction 8-hydroxycopalyl diphosphate = (13R)-manoyl oxide + diphosphate. The protein operates within secondary metabolite biosynthesis; terpenoid biosynthesis. Functionally, involved in the biosynthesis of labdane-type diterpenoid including marrubiin and other labdane-related furanoid diterpenoids with potential applications as anti-diabetics, analgesics or vasorelaxants. Terpene synthase the catalyzes the conversion of peregrinol diphosphate to 9,13(R)-epoxy-labd-14-ene, from (+)-copalyl diphosphate ((+)-CPP) to miltiradiene and from 8-hydroxycopalyl diphosphate (LPP, labda-13-en-8-ol diphosphate) to manoyl oxide. The polypeptide is 9,13-epoxylabda-14-ene synthase, chloroplastic (Marrubium vulgare (White horehound)).